Reading from the N-terminus, the 369-residue chain is Phosphoribosyl pyrophosphate synthase-associated protein 2 (369 aa).

An N-acetylmethionine modification is found at Met1. Thr5 carries the post-translational modification Phosphothreonine. 3 positions are modified to phosphoserine: Ser219, Ser227, and Ser233.

The protein belongs to the ribose-phosphate pyrophosphokinase family. Binds to PRPS1 and PRPS2.

Seems to play a negative regulatory role in 5-phosphoribose 1-diphosphate synthesis. The polypeptide is Phosphoribosyl pyrophosphate synthase-associated protein 2 (PRPSAP2) (Pongo abelii (Sumatran orangutan)).